Consider the following 367-residue polypeptide: Heme A synthase (367 aa).

A run of 5 helical transmembrane segments spans residues 26–46, 111–131, 139–159, 174–194, and 212–232; these read IRGW…VGGA, LLAR…WVTG, LPLL…WWMV, LATH…IYRG, and AGAI…VAGL. H274 provides a ligand contact to heme. The next 3 membrane-spanning stretches (helical) occupy residues 276-296, 305-325, and 327-347; these read LGAY…LRAA, SVLL…TLLL, and VPIG…GFAI. H335 serves as a coordination point for heme.

The protein belongs to the COX15/CtaA family. Type 2 subfamily. In terms of assembly, interacts with CtaB. Requires heme b as cofactor.

It is found in the cell membrane. It catalyses the reaction Fe(II)-heme o + 2 A + H2O = Fe(II)-heme a + 2 AH2. Its pathway is porphyrin-containing compound metabolism; heme A biosynthesis; heme A from heme O: step 1/1. Catalyzes the conversion of heme O to heme A by two successive hydroxylations of the methyl group at C8. The first hydroxylation forms heme I, the second hydroxylation results in an unstable dihydroxymethyl group, which spontaneously dehydrates, resulting in the formyl group of heme A. In Rhizobium meliloti (strain 1021) (Ensifer meliloti), this protein is Heme A synthase.